The primary structure comprises 104 residues: Precursor of CEP11 (104 aa).

The first 27 residues, 1–27, serve as a signal peptide directing secretion; it reads MAKTRRVIYLFLTIVLLFCELIDEAQG. Residues 28–85 constitute a propeptide that is removed on maturation; it reads SRFRCHHSEDYSCKKRSSHHHHHHHHHQQQQHHHKDTPPEELQGSIKTRRSKDIYGLN. Residues 37-104 are disordered; the sequence is DYSCKKRSSH…SPGVGHLIKT (68 aa). A compositionally biased stretch (basic residues) spans 41-62; sequence KKRSSHHHHHHHHHQQQQHHHK. A hydroxyproline mark is found at P92 and P96. A propeptide spanning residues 101 to 104 is cleaved from the precursor; that stretch reads LIKT.

Belongs to the C-terminally encoded plant signaling peptide (CEP) family. In terms of assembly, interacts with CEP receptors (e.g. CEPR1 and CEPR2). The mature small signaling peptide is generated by proteolytic processing of the longer precursor. As to expression, expressed in lateral root primordia and in lateral roots excluding the meristem region.

Its subcellular location is the secreted. It is found in the extracellular space. The protein localises to the apoplast. Functionally, extracellular signaling peptide that may regulate primary root growth rate and systemic nitrogen (N)-demand signaling. Mediates up-regulation of genes involved in N uptake and assimilation pathways. The chain is Precursor of CEP11 from Arabidopsis thaliana (Mouse-ear cress).